Reading from the N-terminus, the 159-residue chain is Transcriptional repressor NrdR (159 aa).

The segment at 3 to 34 (CPFCGAEDTSVVDSRISEEGARIRRRRRCVEC) is a zinc-finger region. The 91-residue stretch at 49–139 (PQVIKQDGNR…VYRSFEDVGD (91 aa)) folds into the ATP-cone domain.

This sequence belongs to the NrdR family. It depends on Zn(2+) as a cofactor.

Functionally, negatively regulates transcription of bacterial ribonucleotide reductase nrd genes and operons by binding to NrdR-boxes. This Nitrosomonas europaea (strain ATCC 19718 / CIP 103999 / KCTC 2705 / NBRC 14298) protein is Transcriptional repressor NrdR.